The chain runs to 95 residues: Putative ESAT-6-like protein X (95 aa).

The disordered stretch occupies residues 72-95 (HGQKVQRASSSMADTDRSVSSAWS).

This sequence belongs to the WXG100 family.

The chain is Putative ESAT-6-like protein X from Mycobacterium leprae (strain TN).